Consider the following 88-residue polypeptide: UPF0367 protein Synpcc7942_1638 (88 aa).

This sequence belongs to the UPF0367 family.

In Synechococcus elongatus (strain ATCC 33912 / PCC 7942 / FACHB-805) (Anacystis nidulans R2), this protein is UPF0367 protein Synpcc7942_1638.